The primary structure comprises 204 residues: Large ribosomal subunit protein eL15 (204 aa).

It belongs to the eukaryotic ribosomal protein eL15 family. In terms of assembly, component of the large ribosomal subunit.

Its subcellular location is the cytoplasm. Component of the large ribosomal subunit. The ribosome is a large ribonucleoprotein complex responsible for the synthesis of proteins in the cell. The polypeptide is Large ribosomal subunit protein eL15 (rpl15) (Silurus meridionalis (Southern catfish)).